The chain runs to 198 residues: Peptide methionine sulfoxide reductase MsrA 2 (198 aa).

C32 is an active-site residue.

The protein belongs to the MsrA Met sulfoxide reductase family.

It carries out the reaction L-methionyl-[protein] + [thioredoxin]-disulfide + H2O = L-methionyl-(S)-S-oxide-[protein] + [thioredoxin]-dithiol. The enzyme catalyses [thioredoxin]-disulfide + L-methionine + H2O = L-methionine (S)-S-oxide + [thioredoxin]-dithiol. Functionally, has an important function as a repair enzyme for proteins that have been inactivated by oxidation. Catalyzes the reversible oxidation-reduction of methionine sulfoxide in proteins to methionine. The protein is Peptide methionine sulfoxide reductase MsrA 2 (msrA2) of Rhizobium meliloti (strain 1021) (Ensifer meliloti).